Consider the following 201-residue polypeptide: UPF0301 protein MMAR_0053 (201 aa).

Belongs to the UPF0301 (AlgH) family.

The protein is UPF0301 protein MMAR_0053 of Mycobacterium marinum (strain ATCC BAA-535 / M).